A 506-amino-acid polypeptide reads, in one-letter code: MSGIDFKQKISFQRPFSKPSSAEDEYEITRVFESDRGRIVNSAAIRRLQQKTQVFPLERNAAVRSRLTHSLEVQQVGRYIAKEILNRFKQDKKITAYGLDKLLDPFESIVEMACLMHDIGNPPFGHFGESAINDWFTKRMDPNGGSGSEPQSRDQCQVEVLKLREGETELNILRSKIRHDLSQFEGNAQAIRLVHSLLKLNLTYAQVGCILKYTKPAYWSAPIPASHNYLMKKPGFYLAEENYVKELRRELNMEEFDRFPLTYIMEAADDISYCIADLEDAVEKNIFSVEQLYDHMSQEWGAVTPGDLFDKVVGAAFRQLGREQGRRSSEDQFFMYLRVNTVGKLVPHAAQRFIENLPAVFSGSFNQALLEDSSAACKLLQIFKRVAVKHVFNHPEVEQLELQGYRVISGLLDIYSPLLAMPETAFTQLVADDRHRKYPIETRLFHKLSIKHRLAYAESAERIRNLPSEQYEIYEYYYRARLIQDYISGMTDLYAYDEYRRLMAAE.

An HD domain is found at 66 to 274; the sequence is RLTHSLEVQQ…MEAADDISYC (209 aa).

The protein belongs to the dGTPase family. Type 1 subfamily. Homotetramer. The cofactor is Mg(2+).

It carries out the reaction dGTP + H2O = 2'-deoxyguanosine + triphosphate + H(+). DGTPase preferentially hydrolyzes dGTP over the other canonical NTPs. In Yersinia pseudotuberculosis serotype O:3 (strain YPIII), this protein is Deoxyguanosinetriphosphate triphosphohydrolase.